Consider the following 503-residue polypeptide: Rhomboid-type serine protease 2 (503 aa).

Polar residues predominate over residues 1 to 11; sequence MAAQSYYNGAY. A disordered region spans residues 1-66; sequence MAAQSYYNGA…SLRYSQQSIG (66 aa). Residues 1–136 are Cytoplasmic-facing; it reads MAAQSYYNGA…QKKKGFFQKK (136 aa). A helical transmembrane segment spans residues 137–157; it reads IAYVTYILTIAQIIVFIVELV. The Extracellular segment spans residues 158–253; that stretch reads KMGQLTGSPI…DKPAPDQWFR (96 aa). Residues 254–274 form a helical membrane-spanning segment; that stretch reads FIIPMFLHSGFVHIGFNLLVQ. The Cytoplasmic segment spans residues 275 to 283; that stretch reads MTMGADMER. A helical transmembrane segment spans residues 284–304; that stretch reads MIGWWRYGLVYLSSGIWGFVL. The Extracellular portion of the chain corresponds to 305–316; sequence GGNYAGQGEASC. Residues 317-337 form a helical membrane-spanning segment; the sequence is GCSGALFGILALFVLDLLYGW. Residue S319 is the Nucleophile of the active site. Residues 338 to 342 lie on the Cytoplasmic side of the membrane; sequence NDRQN. The chain crosses the membrane as a helical span at residues 343-363; the sequence is PWVELIIMVLGIAVSFVLGLL. Residues 364–365 lie on the Extracellular side of the membrane; the sequence is PG. Residues 366–386 form a helical membrane-spanning segment; that stretch reads LDNFSHLGGFTMGLALGLCVM. Residue H371 is part of the active site. Residues 387–449 are Cytoplasmic-facing; that stretch reads RSPNALRERI…FAGRKPLWWA (63 aa). The helical transmembrane segment at 450-470 threads the bilayer; the sequence is WWLVRLGALVAVLIGFILLIV. Residues 471–503 are Extracellular-facing; it reads NFYKYPSSNCSWCYRFSCLPVNGWCDQGNLFSR.

This sequence belongs to the peptidase S54 family.

Its subcellular location is the membrane. The catalysed reaction is Cleaves type-1 transmembrane domains using a catalytic dyad composed of serine and histidine that are contributed by different transmembrane domains.. In terms of biological role, probable rhomboid-type serine protease that catalyzes intramembrane proteolysis. The sequence is that of Rhomboid-type serine protease 2 from Emericella nidulans (strain FGSC A4 / ATCC 38163 / CBS 112.46 / NRRL 194 / M139) (Aspergillus nidulans).